A 320-amino-acid chain; its full sequence is o-succinylbenzoate synthase (320 aa).

Catalysis depends on lysine 133, which acts as the Proton donor. Aspartate 161, glutamate 190, and aspartate 213 together coordinate Mg(2+). Lysine 235 (proton acceptor) is an active-site residue.

It belongs to the mandelate racemase/muconate lactonizing enzyme family. MenC type 1 subfamily. Requires a divalent metal cation as cofactor.

The catalysed reaction is (1R,6R)-6-hydroxy-2-succinyl-cyclohexa-2,4-diene-1-carboxylate = 2-succinylbenzoate + H2O. The protein operates within quinol/quinone metabolism; 1,4-dihydroxy-2-naphthoate biosynthesis; 1,4-dihydroxy-2-naphthoate from chorismate: step 4/7. Its pathway is quinol/quinone metabolism; menaquinone biosynthesis. In terms of biological role, converts 2-succinyl-6-hydroxy-2,4-cyclohexadiene-1-carboxylate (SHCHC) to 2-succinylbenzoate (OSB). This chain is o-succinylbenzoate synthase, found in Salmonella paratyphi A (strain ATCC 9150 / SARB42).